Here is a 336-residue protein sequence, read N- to C-terminus: Phosphate acyltransferase (336 aa).

Belongs to the PlsX family. As to quaternary structure, homodimer. Probably interacts with PlsY.

Its subcellular location is the cytoplasm. The enzyme catalyses a fatty acyl-[ACP] + phosphate = an acyl phosphate + holo-[ACP]. It participates in lipid metabolism; phospholipid metabolism. Catalyzes the reversible formation of acyl-phosphate (acyl-PO(4)) from acyl-[acyl-carrier-protein] (acyl-ACP). This enzyme utilizes acyl-ACP as fatty acyl donor, but not acyl-CoA. The sequence is that of Phosphate acyltransferase from Dictyoglomus turgidum (strain DSM 6724 / Z-1310).